Here is a 219-residue protein sequence, read N- to C-terminus: Ribosome maturation factor RimP (219 aa).

The disordered stretch occupies residues 195-219 (EGRIPGDDLGAEPEDAASTETQEKK).

It belongs to the RimP family.

The protein resides in the cytoplasm. Required for maturation of 30S ribosomal subunits. This Brucella melitensis biotype 2 (strain ATCC 23457) protein is Ribosome maturation factor RimP.